The primary structure comprises 395 residues: Phosphoglycerate kinase (395 aa).

Residues 21–23 (DLN), R36, 59–62 (HLGR), R114, and R147 each bind substrate. ATP contacts are provided by residues K198, E320, and 346–349 (GGDT).

This sequence belongs to the phosphoglycerate kinase family. Monomer.

The protein resides in the cytoplasm. The catalysed reaction is (2R)-3-phosphoglycerate + ATP = (2R)-3-phospho-glyceroyl phosphate + ADP. The protein operates within carbohydrate degradation; glycolysis; pyruvate from D-glyceraldehyde 3-phosphate: step 2/5. In Nitrosospira multiformis (strain ATCC 25196 / NCIMB 11849 / C 71), this protein is Phosphoglycerate kinase.